The sequence spans 118 residues: Phospholipase A2 'basic' (118 aa).

7 disulfide bridges follow: cysteine 11–cysteine 70, cysteine 26–cysteine 117, cysteine 28–cysteine 44, cysteine 43–cysteine 98, cysteine 50–cysteine 91, cysteine 59–cysteine 84, and cysteine 77–cysteine 89. Tyrosine 27, glycine 29, and glycine 31 together coordinate Ca(2+). Residue histidine 47 is part of the active site. Position 48 (aspartate 48) interacts with Ca(2+). The Coagulation factor Xa binding motif signature appears at 52–69 (EKAGKMGCWPYLTLYKYK). Residue aspartate 92 is part of the active site.

This sequence belongs to the phospholipase A2 family. Group I subfamily. D49 sub-subfamily. Requires Ca(2+) as cofactor. In terms of tissue distribution, expressed by the venom gland.

It is found in the secreted. It carries out the reaction a 1,2-diacyl-sn-glycero-3-phosphocholine + H2O = a 1-acyl-sn-glycero-3-phosphocholine + a fatty acid + H(+). Functionally, snake venom phospholipase A2 (PLA2) that shows strong anticoagulant activity. Binds directly with the coagulation factor FXa (F10) and blocks the formation of the prothombinase complex. Acts by a nonenzymatic mechanism. Also inhibits the complex composed of tissue factor (F3) and coagulation factor VIIa (F7) (TF-VIIa complex) by both enzymatic and nonenzymatic mechanisms. PLA2 catalyzes the calcium-dependent hydrolysis of the 2-acyl groups in 3-sn-phosphoglycerides. This chain is Phospholipase A2 'basic', found in Naja nigricollis (Black-necked spitting cobra).